The sequence spans 143 residues: Na(+)/H(+) antiporter subunit B (143 aa).

Helical transmembrane passes span 9–31, 36–58, 71–93, and 117–139; these read LILQTATKLVSFIILLFSFYLFL, APGGGFVGGLITSSSIVLLLLAY, FIYVAGAGLLLAVLTGVGSFVFG, and ATIFDLGVYLVVVGITMTIIQTI.

The protein belongs to the CPA3 antiporters (TC 2.A.63) subunit B family. In terms of assembly, forms a heterooligomeric complex that consists of seven subunits: MrpA, MrpB, MrpC, MrpD, MrpE, MrpF and MrpG.

It is found in the cell membrane. In terms of biological role, mrp complex is a Na(+)/H(+) antiporter that is considered to be the major Na(+) excretion system in B.subtilis. Has a major role in Na(+) resistance and a minor role in Na(+)- and K(+)-dependent pH homeostasis as compared to TetB. MrpA may be the actual Na(+)/H(+) antiporter, although the six other Mrp proteins are all required for Na(+)/H(+) antiport activity and Na(+) resistance. MrpA is required for initiation of sporulation when external Na(+) concentration increases. Also transports Li(+) but not K(+), Ca(2+) or Mg(2+). This is Na(+)/H(+) antiporter subunit B (mrpB) from Bacillus subtilis (strain 168).